The chain runs to 207 residues: Thiamine-phosphate synthase (207 aa).

4-amino-2-methyl-5-(diphosphooxymethyl)pyrimidine is bound by residues 36 to 40 (QLRIK) and Asp68. Mg(2+) is bound by residues Asp69 and Asp88. Ser106 lines the 4-amino-2-methyl-5-(diphosphooxymethyl)pyrimidine pocket. 132 to 134 (TQT) serves as a coordination point for 2-[(2R,5Z)-2-carboxy-4-methylthiazol-5(2H)-ylidene]ethyl phosphate. Position 135 (Lys135) interacts with 4-amino-2-methyl-5-(diphosphooxymethyl)pyrimidine. 2-[(2R,5Z)-2-carboxy-4-methylthiazol-5(2H)-ylidene]ethyl phosphate-binding positions include Gly162 and 182 to 183 (VS).

This sequence belongs to the thiamine-phosphate synthase family. It depends on Mg(2+) as a cofactor.

The enzyme catalyses 2-[(2R,5Z)-2-carboxy-4-methylthiazol-5(2H)-ylidene]ethyl phosphate + 4-amino-2-methyl-5-(diphosphooxymethyl)pyrimidine + 2 H(+) = thiamine phosphate + CO2 + diphosphate. It catalyses the reaction 2-(2-carboxy-4-methylthiazol-5-yl)ethyl phosphate + 4-amino-2-methyl-5-(diphosphooxymethyl)pyrimidine + 2 H(+) = thiamine phosphate + CO2 + diphosphate. It carries out the reaction 4-methyl-5-(2-phosphooxyethyl)-thiazole + 4-amino-2-methyl-5-(diphosphooxymethyl)pyrimidine + H(+) = thiamine phosphate + diphosphate. Its pathway is cofactor biosynthesis; thiamine diphosphate biosynthesis; thiamine phosphate from 4-amino-2-methyl-5-diphosphomethylpyrimidine and 4-methyl-5-(2-phosphoethyl)-thiazole: step 1/1. In terms of biological role, condenses 4-methyl-5-(beta-hydroxyethyl)thiazole monophosphate (THZ-P) and 2-methyl-4-amino-5-hydroxymethyl pyrimidine pyrophosphate (HMP-PP) to form thiamine monophosphate (TMP). The sequence is that of Thiamine-phosphate synthase from Pyrococcus horikoshii (strain ATCC 700860 / DSM 12428 / JCM 9974 / NBRC 100139 / OT-3).